The sequence spans 211 residues: Phosphoserine phosphatase (211 aa).

Asp-7 serves as the catalytic Nucleophile. Mg(2+)-binding residues include Asp-7 and Asp-9. Asp-9 (proton donor) is an active-site residue. Residues Glu-16, Arg-52, 95–96 (TG), and Lys-141 each bind substrate. Position 164 (Asp-164) interacts with Mg(2+). Asn-167 serves as a coordination point for substrate.

This sequence belongs to the HAD-like hydrolase superfamily. SerB family. It depends on Mg(2+) as a cofactor.

It carries out the reaction O-phospho-L-serine + H2O = L-serine + phosphate. The catalysed reaction is O-phospho-D-serine + H2O = D-serine + phosphate. The protein operates within amino-acid biosynthesis; L-serine biosynthesis; L-serine from 3-phospho-D-glycerate: step 3/3. Functionally, catalyzes the dephosphorylation of phosphoserine (P-Ser). This Halobacterium salinarum (strain ATCC 29341 / DSM 671 / R1) protein is Phosphoserine phosphatase (serB).